The chain runs to 79 residues: Alpha-actitoxin-Ms11a-4 (79 aa).

The signal sequence occupies residues 1-23; that stretch reads MKVLVAVLVFALLMCMFVDIAES. The propeptide occupies 24–46; the sequence is RRRDNPEYPSGLRYDEEMGVFKR. Disulfide bonds link C47/C61, C54/C67, and C60/C76. At Y78 the chain carries Tyrosine amide.

Its subcellular location is the secreted. The protein resides in the nematocyst. Its function is as follows. Alpha-toxins act on postsynaptic membranes, they bind to the nicotinic acetylcholine receptors (nAChR) and thus inhibit them. This toxin very weakly competes with alpha-bungarotoxin for binding to orthosteric sites on muscle-type T.carlifornicus (IC(50)=14.95 uM) and human alpha-7/CHRNA7 nAChRs (IC(50)&gt;45 uM). The polypeptide is Alpha-actitoxin-Ms11a-4 (Metridium senile (Brown sea anemone)).